A 201-amino-acid polypeptide reads, in one-letter code: Troponin I (201 aa).

An N-acetylalanine modification is found at alanine 1. The span at 1–33 (ADKAKAAEEAKKKQDDIDRKKAEVRKRLEEQSL) shows a compositional bias: basic and acidic residues. Positions 1 to 45 (ADKAKAAEEAKKKQDDIDRKKAEVRKRLEEQSLKKQKKGFMTPER) are disordered. The tract at residues 108–117 (IESDKYDVEL) is troponin T-interaction. The segment at 135 to 148 (DLRGKFIKPTLKKV) is actin-binding. An N6,N6,N6-trimethyllysine mark is found at lysine 142 and lysine 146. Residues 182-201 (EDDKGATEGDGPAAEEVAAE) are disordered.

It belongs to the troponin I family.

Troponin I is the actomyosin ATPase inhibitory subunit present in the thin filament regulatory complex. The protein is Troponin I of Astacus leptodactylus (Turkish narrow-clawed crayfish).